Here is a 333-residue protein sequence, read N- to C-terminus: Tubulin alpha chain (333 aa).

GTP is bound by residues S48, G52, T53, T88, N115, and N137.

Belongs to the tubulin family. Dimer of alpha and beta chains. A typical microtubule is a hollow water-filled tube with an outer diameter of 25 nm and an inner diameter of 15 nM. Alpha-beta heterodimers associate head-to-tail to form protofilaments running lengthwise along the microtubule wall with the beta-tubulin subunit facing the microtubule plus end conferring a structural polarity. Microtubules usually have 13 protofilaments but different protofilament numbers can be found in some organisms and specialized cells. Mg(2+) serves as cofactor. Post-translationally, undergoes a tyrosination/detyrosination cycle, the cyclic removal and re-addition of a C-terminal tyrosine residue by the enzymes tubulin tyrosine carboxypeptidase (TTCP) and tubulin tyrosine ligase (TTL), respectively.

It is found in the cytoplasm. The protein resides in the cytoskeleton. The enzyme catalyses GTP + H2O = GDP + phosphate + H(+). Tubulin is the major constituent of microtubules, a cylinder consisting of laterally associated linear protofilaments composed of alpha- and beta-tubulin heterodimers. Microtubules grow by the addition of GTP-tubulin dimers to the microtubule end, where a stabilizing cap forms. Below the cap, tubulin dimers are in GDP-bound state, owing to GTPase activity of alpha-tubulin. The chain is Tubulin alpha chain (tuba) from Dictyostelium purpureum (Slime mold).